A 529-amino-acid chain; its full sequence is Probable feruloyl esterase B-1 (529 aa).

An N-terminal signal peptide occupies residues Met1 to Ala19. Disulfide bonds link Cys27–Cys75 and Cys63–Cys114. Residues Asn53, Asn64, Asn85, Asn98, and Asn138 are each glycosylated (N-linked (GlcNAc...) asparagine). Cystine bridges form between Cys187-Cys445, Cys256-Cys273, Cys282-Cys295, and Cys505-Cys527. Ser188 serves as the catalytic Acyl-ester intermediate. Residue Asn233 is glycosylated (N-linked (GlcNAc...) asparagine). Asp257, Asp260, Ala262, Asp264, and Leu266 together coordinate Ca(2+). N-linked (GlcNAc...) asparagine glycosylation is found at Asn286, Asn290, and Asn354. Active-site charge relay system residues include Asp404 and His444.

Belongs to the tannase family.

The protein localises to the secreted. It catalyses the reaction feruloyl-polysaccharide + H2O = ferulate + polysaccharide.. Involved in degradation of plant cell walls. Hydrolyzes the feruloyl-arabinose ester bond in arabinoxylans as well as the feruloyl-galactose and feruloyl-arabinose ester bonds in pectin. In Aspergillus terreus (strain NIH 2624 / FGSC A1156), this protein is Probable feruloyl esterase B-1 (faeB-1).